Consider the following 336-residue polypeptide: P2Y purinoceptor 13 (336 aa).

Residues 1-32 lie on the Extracellular side of the membrane; the sequence is MLGTVNTTGMQGFNKSERCPRDTRMTQLLFPV. Asparagine 6 and asparagine 14 each carry an N-linked (GlcNAc...) asparagine glycan. The chain crosses the membrane as a helical span at residues 33–53; sequence LYTVVFFTGVLLNTLALWVFI. Residues 54 to 60 lie on the Cytoplasmic side of the membrane; the sequence is HIPSNST. The chain crosses the membrane as a helical span at residues 61-81; it reads FIIYLKNTLVADLIMTLMLPF. Topologically, residues 82 to 100 are extracellular; sequence KILSDSRLAPWQLRGFVCT. The cysteines at positions 99 and 176 are disulfide-linked. A helical membrane pass occupies residues 101–121; sequence FSSVVFYETMYVGIMMLGLIA. Residues 122–144 are Cytoplasmic-facing; that stretch reads FDRFLKIVVPFRKTFVKKTAFAK. Residues 145-165 traverse the membrane as a helical segment; the sequence is IVSISIWLLMFLISLPNMILN. The Extracellular portion of the chain corresponds to 166-193; that stretch reads KEATASTVKKCASLKSPLGLLWHQVVSH. The helical transmembrane segment at 194–214 threads the bilayer; sequence TCQFIFWTVFILMLLFYTVIA. Over 215–237 the chain is Cytoplasmic; that stretch reads KKVYDSYRKFKSRDSKHKRLEAK. The chain crosses the membrane as a helical span at residues 238–258; the sequence is VFIVMAVFFVCFAPFHFVRVP. Topologically, residues 259–281 are extracellular; sequence YTHSQTTNKTDCRLENQLFLAKE. Asparagine 266 carries an N-linked (GlcNAc...) asparagine glycan. The chain crosses the membrane as a helical span at residues 282–302; it reads STLFLATTNICMDPLIYIILC. The Cytoplasmic segment spans residues 303-336; sequence KKFTRKVPCMRWRTKTAASSDEHHSSQTDNITLS.

This sequence belongs to the G-protein coupled receptor 1 family. As to expression, highest levels in spleen, liver brain and kidney. Lower but significant level are also detected in intestine, stomach, skeletal muscle, testis, heart and lung.

The protein resides in the cell membrane. Its function is as follows. Receptor for ADP. Coupled to G(i)-proteins. May play a role in hematopoiesis and the immune system. In Rattus norvegicus (Rat), this protein is P2Y purinoceptor 13 (P2ry13).